Here is a 139-residue protein sequence, read N- to C-terminus: D-ribose pyranase (139 aa).

H20 functions as the Proton donor in the catalytic mechanism. Residues D28, H106, and 128–130 contribute to the substrate site; that span reads YAN.

It belongs to the RbsD / FucU family. RbsD subfamily. As to quaternary structure, homodecamer.

The protein resides in the cytoplasm. The catalysed reaction is beta-D-ribopyranose = beta-D-ribofuranose. It functions in the pathway carbohydrate metabolism; D-ribose degradation; D-ribose 5-phosphate from beta-D-ribopyranose: step 1/2. Functionally, catalyzes the interconversion of beta-pyran and beta-furan forms of D-ribose. This is D-ribose pyranase from Aeromonas salmonicida (strain A449).